A 77-amino-acid polypeptide reads, in one-letter code: Secapin (77 aa).

The N-terminal stretch at 1–32 (MKNYSKNATYLITVLLFSFVAMLLIIPSKCEA) is a signal peptide. A propeptide spanning residues 33–52 (VSNDMQPLEARTADLVQQPR) is cleaved from the precursor. Residues C61 and C72 are joined by a disulfide bond.

This sequence belongs to the secapin family. In terms of tissue distribution, expressed by the venom gland.

Its subcellular location is the secreted. Its function is as follows. Nontoxic peptide. The polypeptide is Secapin (Apis cerana cerana (Oriental honeybee)).